Reading from the N-terminus, the 87-residue chain is Protein anon-73B1 (87 aa).

Residues 25–47 traverse the membrane as a helical segment; sequence LLIRYGLYVGALFQFVCISAAVL. Residues 52 to 87 are disordered; it reads PDVNSNPETGEVTEREGEPVRTRLHKIRKLEKKKRR. The span at 63-72 shows a compositional bias: basic and acidic residues; sequence VTEREGEPVR. Positions 73–87 are enriched in basic residues; the sequence is TRLHKIRKLEKKKRR.

This sequence belongs to the UPF0239 family.

The protein localises to the membrane. This is Protein anon-73B1 from Drosophila erecta (Fruit fly).